A 328-amino-acid polypeptide reads, in one-letter code: MRSHTGLRALVAPGCSLLLLYLLAATRPDRAVGDPADSAFTSLPVREEMMAKYANLSLETYNISLTEQTRVSEQNITLERPSHLELECTFTATEDVMSMNVTWKKDDALLETTDGFNTTKMGDTLYSQYRFTVFNSKQMGKYSCFLGEELRGTFNIRVPKVHGKNKPLITYVGDSTVLKCECQNCLPLNWTWYMSNGTAQVPIDVHVNDKFDINGSYANETKLKVKHLLEEDGGSYWCRAAFPLGESEEHIKLVVLSFMVPLKPFLAIIAEVILLVAIILLCEVYTQKKKNDPDDGKEFEQIEQLKSDDSNGIENNVPRYRKTDSGDQ.

The N-terminal stretch at 1 to 33 is a signal peptide; that stretch reads MRSHTGLRALVAPGCSLLLLYLLAATRPDRAVG. Residues 34–264 are Extracellular-facing; sequence DPADSAFTSL…VLSFMVPLKP (231 aa). Asn55, Asn62, Asn75, Asn100, Asn117, Asn189, Asn196, Asn214, and Asn219 each carry an N-linked (GlcNAc...) asparagine glycan. 2 consecutive Ig-like domains span residues 67–160 and 159–254; these read EQTR…RVPK and PKVH…IKLV. Intrachain disulfides connect Cys88–Cys144 and Cys180–Cys238. The chain crosses the membrane as a helical span at residues 265–285; sequence FLAIIAEVILLVAIILLCEVY. Topologically, residues 286–328 are cytoplasmic; the sequence is TQKKKNDPDDGKEFEQIEQLKSDDSNGIENNVPRYRKTDSGDQ. Residues 289–309 show a composition bias toward basic and acidic residues; sequence KKNDPDDGKEFEQIEQLKSDD. A disordered region spans residues 289-328; the sequence is KKNDPDDGKEFEQIEQLKSDDSNGIENNVPRYRKTDSGDQ. Position 310 is a phosphoserine (Ser310).

In terms of assembly, interacts with SLC16A1, SLC16A6 and SLC16A7. In terms of processing, N-glycosylated. Detected in prostate, mammary gland and erythrocytes (at protein level). Detected in testis, brain, prostate, heart, kidney, liver, mammary gland and lung.

Its subcellular location is the cell membrane. The protein localises to the synapse. Its function is as follows. Plays a role in the outgrowth of motoneurons and in the formation of neuromuscular junctions. Following muscle denervation, promotes nerve terminal sprouting and the formation of additional acetylcholine receptor clusters at synaptic sites without affecting terminal Schwann cell number or morphology. Delays the retraction of terminal sprouts following re-innervation of denervated endplates. Plays a role in targeting the monocarboxylate transporters SLC16A1, SLC16A6 and SLC16A7 to the cell membrane. The polypeptide is Embigin (Emb) (Rattus norvegicus (Rat)).